The primary structure comprises 500 residues: FAD-linked oxidoreductase srdI (500 aa).

An N-terminal signal peptide occupies residues 1–20 (MHLSSSLLFTSALLAGGINA). Asn47 is a glycosylation site (N-linked (GlcNAc...) asparagine). Residues 69 to 241 (YRPPSYQAAI…TQATYKMHKS (173 aa)) enclose the FAD-binding PCMH-type domain. Asn257 and Asn282 each carry an N-linked (GlcNAc...) asparagine glycan.

Belongs to the oxygen-dependent FAD-linked oxidoreductase family. The cofactor is FAD.

Functionally, FAD-linked oxidoreductase; part of the gene cluster that mediates the biosynthesis of sordarial, a salicylic aldehyde structurally related to the phytotoxin pyriculol. The most interesting aspect of this pathway is formation of an aromatic product from the highly reducing polyketide synthase srdA. SrdA synthesizes a reduced polyketide chain from one molecule of acetyl-CoA and five molecules of malonyl-CoA. The polyketide chain is then reductively released as an aldehyde. The oxidoreductases srdC, srdD and srdE then oxidize one of the hydroxy groups to facilitate the intramolecular aldol condensation, followed by dehydration to yield a salicylic aldehyde. This aldehyde can undergo facile reduction by endogenous reductases to yield the alcohol 1-hydroxy-2-hydroxymethyl-3-pent-1,3-dienylbenzene. The flavin-dependent srdI counteract against the propensity of the aldehydes to be reduced under physiological conditions and is responsible for reoxidizing 1-hydroxy-2-hydroxymethyl-3-pent-1,3-dienylbenzene back to the salicylic aldehyde. This salicylic aldehyde is then selectively epoxidized by the cupin-domain-containing oxidoreductase srdB to yield the epoxide, which can be hydrolyzed stereoselectively by the hydrolase srdG to give the final product sordarial. The protein is FAD-linked oxidoreductase srdI of Neurospora crassa (strain ATCC 24698 / 74-OR23-1A / CBS 708.71 / DSM 1257 / FGSC 987).